Here is a 78-residue protein sequence, read N- to C-terminus: Acyl carrier protein (78 aa).

Positions 2 to 77 (SDIEQRVKQA…SAIDYVTKKL (76 aa)) constitute a Carrier domain. Ser37 is subject to O-(pantetheine 4'-phosphoryl)serine.

It belongs to the acyl carrier protein (ACP) family. 4'-phosphopantetheine is transferred from CoA to a specific serine of apo-ACP by AcpS. This modification is essential for activity because fatty acids are bound in thioester linkage to the sulfhydryl of the prosthetic group.

The protein localises to the cytoplasm. It functions in the pathway lipid metabolism; fatty acid biosynthesis. Functionally, carrier of the growing fatty acid chain in fatty acid biosynthesis. The polypeptide is Acyl carrier protein (Acinetobacter baumannii (strain AB307-0294)).